We begin with the raw amino-acid sequence, 447 residues long: Trimethylamine monooxygenase (447 aa).

Residues Ser-13, Glu-38, Gln-40, Leu-46, Trp-47, and His-63 each coordinate FAD. NADP(+)-binding residues include Trp-71 and Asn-73. 2 residues coordinate FAD: Asn-73 and Val-126. NADP(+) is bound by residues Tyr-173, Ala-205, Ser-206, Ser-208, and Arg-229. FAD contacts are provided by Gln-318 and Thr-321. Arg-413 is a binding site for NADP(+).

This sequence belongs to the FMO family. FAD is required as a cofactor.

It carries out the reaction trimethylamine + NADPH + O2 = trimethylamine N-oxide + NADP(+) + H2O. Functionally, catalyzes the oxidation of trimethylamine (TMA) to produce trimethylamine N-oxide (TMAO). TMA is the best substrate, but the enzyme can also oxidize methimazole, indole and dimethylamine (DMA). This is Trimethylamine monooxygenase from Roseovarius nubinhibens (strain ATCC BAA-591 / DSM 15170 / ISM).